Here is a 100-residue protein sequence, read N- to C-terminus: Osteocalcin (100 aa).

A signal peptide spans 1-23 (MRALTLLALLALAALCIAGQAGA). The propeptide occupies 24-51 (KPSGAESSKGAAFVSKQEGSEVVKRPRR). In terms of domain architecture, Gla spans 52–98 (YLYQWLGAPVPYPDTLEPRREVCELNPDCDELADHIGFQEAYRRFYG). Ca(2+) contacts are provided by E68, E72, E75, and D81. 4-carboxyglutamate is present on residues E68, E72, and E75. C74 and C80 are joined by a disulfide.

The protein belongs to the osteocalcin/matrix Gla protein family. Gamma-carboxyglutamate residues are formed by vitamin K dependent carboxylation by GGCX. These residues are essential for the binding of calcium. Decarboxylation promotes the hormone activity.

The protein localises to the secreted. In terms of biological role, the carboxylated form is one of the main organic components of the bone matrix, which constitutes 1-2% of the total bone protein: it acts as a negative regulator of bone formation and is required to limit bone formation without impairing bone resorption or mineralization. The carboxylated form binds strongly to apatite and calcium. Functionally, the uncarboxylated form acts as a hormone secreted by osteoblasts, which regulates different cellular processes, such as energy metabolism, male fertility and brain development. Regulates of energy metabolism by acting as a hormone favoring pancreatic beta-cell proliferation, insulin secretion and sensitivity and energy expenditure. Uncarboxylated osteocalcin hormone also promotes testosterone production in the testes: acts as a ligand for G protein-coupled receptor GPRC6A at the surface of Leydig cells, initiating a signaling response that promotes the expression of enzymes required for testosterone synthesis in a CREB-dependent manner. Also acts as a regulator of brain development: osteocalcin hormone crosses the blood-brain barrier and acts as a ligand for GPR158 on neurons, initiating a signaling response that prevents neuronal apoptosis in the hippocampus, favors the synthesis of all monoamine neurotransmitters and inhibits that of gamma-aminobutyric acid (GABA). Osteocalcin also crosses the placenta during pregnancy and maternal osteocalcin is required for fetal brain development. The protein is Osteocalcin of Pan troglodytes (Chimpanzee).